Reading from the N-terminus, the 444-residue chain is Protein CLP1 homolog (444 aa).

ATP-binding positions include Glu-33, Lys-72, and 140–145 (DSGKST).

The protein belongs to the Clp1 family. Clp1 subfamily. In terms of assembly, interacts with PCFS4 and SYM5. Forms a complex with cleavage and polyadenylation specificity factor (CPSF) subunits CPSF30, CPSF100, PCFS1, PCFS4, PCFS5, CPSF160 and FY.

The protein localises to the nucleus. Its function is as follows. Required for endonucleolytic cleavage during polyadenylation-dependent pre-mRNA 3'-end formation. Functions in gametophyte, embryo and postembryotic development. This Arabidopsis thaliana (Mouse-ear cress) protein is Protein CLP1 homolog (CLPS3).